Here is a 188-residue protein sequence, read N- to C-terminus: Photosystem I assembly protein Ycf4 (188 aa).

A run of 2 helical transmembrane segments spans residues 28–48 (WATV…SSYL) and 68–88 (IAIG…WATI).

Belongs to the Ycf4 family.

The protein localises to the cellular thylakoid membrane. In terms of biological role, seems to be required for the assembly of the photosystem I complex. The protein is Photosystem I assembly protein Ycf4 of Cyanothece sp. (strain PCC 7425 / ATCC 29141).